The sequence spans 456 residues: tRNA-2-methylthio-N(6)-dimethylallyladenosine synthase (456 aa).

Residues 19–136 (LTFNVQTFGC…LAELIYARHT (118 aa)) form the MTTase N-terminal domain. [4Fe-4S] cluster is bound by residues Cys28, Cys63, Cys97, Cys173, Cys177, and Cys180. Positions 159–389 (QKYKFKAGVN…LTTIRESSSK (231 aa)) constitute a Radical SAM core domain. One can recognise a TRAM domain in the interval 392 to 455 (KDDEGKIAEV…GFYYMGEMME (64 aa)).

It belongs to the methylthiotransferase family. MiaB subfamily. As to quaternary structure, monomer. [4Fe-4S] cluster is required as a cofactor.

It localises to the cytoplasm. It carries out the reaction N(6)-dimethylallyladenosine(37) in tRNA + (sulfur carrier)-SH + AH2 + 2 S-adenosyl-L-methionine = 2-methylsulfanyl-N(6)-dimethylallyladenosine(37) in tRNA + (sulfur carrier)-H + 5'-deoxyadenosine + L-methionine + A + S-adenosyl-L-homocysteine + 2 H(+). Its function is as follows. Catalyzes the methylthiolation of N6-(dimethylallyl)adenosine (i(6)A), leading to the formation of 2-methylthio-N6-(dimethylallyl)adenosine (ms(2)i(6)A) at position 37 in tRNAs that read codons beginning with uridine. The polypeptide is tRNA-2-methylthio-N(6)-dimethylallyladenosine synthase (Lachnoclostridium phytofermentans (strain ATCC 700394 / DSM 18823 / ISDg) (Clostridium phytofermentans)).